The following is a 913-amino-acid chain: Chitin synthase 1 (913 aa).

The tract at residues Met-1 to Leu-135 is disordered. A glycan (N-linked (GlcNAc...) asparagine) is linked at Asn-25. The segment covering Arg-41–Gly-56 has biased composition (basic and acidic residues). A glycan (N-linked (GlcNAc...) asparagine) is linked at Asn-539. 7 consecutive transmembrane segments (helical) span residues Phe-566 to Leu-586, Ile-625 to Ala-645, Ile-658 to Leu-678, Val-712 to Leu-732, Ser-740 to Phe-760, Thr-840 to Asp-860, and Phe-881 to Leu-901.

The protein belongs to the chitin synthase family. Class III subfamily.

It localises to the cell membrane. The catalysed reaction is [(1-&gt;4)-N-acetyl-beta-D-glucosaminyl](n) + UDP-N-acetyl-alpha-D-glucosamine = [(1-&gt;4)-N-acetyl-beta-D-glucosaminyl](n+1) + UDP + H(+). Polymerizes chitin, a structural polymer of the cell wall and septum, by transferring the sugar moiety of UDP-GlcNAc to the non-reducing end of the growing chitin polymer. Plays a role in cell wall integrity and is involved in tolerance to hyperosmotic conditions. Required to successfully penetrate the host plants and thus plays a key role in pathogenicity. The sequence is that of Chitin synthase 1 from Verticillium dahliae (strain VdLs.17 / ATCC MYA-4575 / FGSC 10137) (Verticillium wilt).